A 99-amino-acid chain; its full sequence is MCEPISDDPQVIPQPKGPAAKALAGAVRFYQKYLSGLKMGSTCRFDPVCSTYALKSVSVHGAVKGTVLAAVRLAKCGPWHPGGFDPVPNPGYWSTETVR.

The protein belongs to the UPF0161 family.

The protein localises to the cell membrane. In terms of biological role, could be involved in insertion of integral membrane proteins into the membrane. The chain is Putative membrane protein insertion efficiency factor from Corynebacterium efficiens (strain DSM 44549 / YS-314 / AJ 12310 / JCM 11189 / NBRC 100395).